The chain runs to 311 residues: Ribonuclease HIII (311 aa).

The region spanning 95–311 (MSIVGSDEVG…NTEKAFRLLK (217 aa)) is the RNase H type-2 domain. Asp101, Glu102, and Asp206 together coordinate a divalent metal cation.

Belongs to the RNase HII family. RnhC subfamily. The cofactor is Mn(2+). Mg(2+) is required as a cofactor.

It is found in the cytoplasm. It carries out the reaction Endonucleolytic cleavage to 5'-phosphomonoester.. In terms of biological role, endonuclease that specifically degrades the RNA of RNA-DNA hybrids. The polypeptide is Ribonuclease HIII (Bacillus cereus (strain 03BB102)).